The primary structure comprises 141 residues: MAKKVVGLIKLQLPAGKATPAPPVGPALGQHGVNIMAFCKEYNAKTANQAGFTIPVVITVYQDRSFSFILKTPPAAVLIKKAAGIESGSGVPNKNKVGKITKEQVKEIAQTKMPDLNAASLEAAMSMIAGTARSMGVEVVD.

It belongs to the universal ribosomal protein uL11 family. In terms of assembly, part of the ribosomal stalk of the 50S ribosomal subunit. Interacts with L10 and the large rRNA to form the base of the stalk. L10 forms an elongated spine to which L12 dimers bind in a sequential fashion forming a multimeric L10(L12)X complex. One or more lysine residues are methylated.

Functionally, forms part of the ribosomal stalk which helps the ribosome interact with GTP-bound translation factors. The protein is Large ribosomal subunit protein uL11 of Clostridium acetobutylicum (strain ATCC 824 / DSM 792 / JCM 1419 / IAM 19013 / LMG 5710 / NBRC 13948 / NRRL B-527 / VKM B-1787 / 2291 / W).